The chain runs to 1066 residues: Phosphatidylinositol 4-kinase PIK1 (1066 aa).

The PIK helical domain occupies 1 to 133 (MHKASSSKKS…GFQVARRVLN (133 aa)). Residues Ser-10 and Ser-236 each carry the phosphoserine modification. Disordered stretches follow at residues 218–240 (KKTS…PIDL), 303–411 (DGKN…KKAN), and 564–624 (NENR…LGDM). Residues 342-356 (NNEDETGGETEEDAD) show a composition bias toward acidic residues. Polar residues-rich tracts occupy residues 374–411 (QPRT…KKAN) and 570–597 (STLT…NEGL). Position 384 is a phosphoserine (Ser-384). A Phosphothreonine modification is found at Thr-394. 2 positions are modified to phosphoserine: Ser-396 and Ser-592. Over residues 598–609 (SSTSRSDSASTA) the composition is skewed to low complexity. One can recognise a PI3K/PI4K catalytic domain in the interval 770–1049 (ATKKERIRKT…FLIGKSLGSI (280 aa)). The tract at residues 776–782 (IRKTSEY) is G-loop. The tract at residues 915–923 (QVKDRHNGN) is catalytic loop. The interval 934 to 958 (HIDFGFMLSNSPGSVGFEAAPFKLT) is activation loop.

This sequence belongs to the PI3/PI4-kinase family. Type III PI4K subfamily. Interacts with FRQ1.

The protein resides in the nucleus. It is found in the golgi apparatus. It localises to the trans-Golgi network. The enzyme catalyses a 1,2-diacyl-sn-glycero-3-phospho-(1D-myo-inositol) + ATP = a 1,2-diacyl-sn-glycero-3-phospho-(1D-myo-inositol 4-phosphate) + ADP + H(+). Functionally, acts on phosphatidylinositol (PI) in the first committed step in the production of the second messenger inositol 1,4,5,-trisphosphate. PIK1 is part of a nuclear phosphoinositide cycle and could control cytokinesis through the actin cytoskeleton. Involved in the response to mating pheromone. In Saccharomyces cerevisiae (strain ATCC 204508 / S288c) (Baker's yeast), this protein is Phosphatidylinositol 4-kinase PIK1.